The following is a 96-amino-acid chain: Co-chaperonin GroES (96 aa).

The protein belongs to the GroES chaperonin family. In terms of assembly, heptamer of 7 subunits arranged in a ring. Interacts with the chaperonin GroEL.

It is found in the cytoplasm. Its function is as follows. Together with the chaperonin GroEL, plays an essential role in assisting protein folding. The GroEL-GroES system forms a nano-cage that allows encapsulation of the non-native substrate proteins and provides a physical environment optimized to promote and accelerate protein folding. GroES binds to the apical surface of the GroEL ring, thereby capping the opening of the GroEL channel. The polypeptide is Co-chaperonin GroES (Chromohalobacter salexigens (strain ATCC BAA-138 / DSM 3043 / CIP 106854 / NCIMB 13768 / 1H11)).